We begin with the raw amino-acid sequence, 1474 residues long: MGKNKLLHPSLVLLLLVLLPTDASVSGKPQYMVLVPSLLHTEAAEKGCVLLSYLNETVTVSASLESVRGNRSLFTDLEAENDVLHCVAFAIPKSSSNEEVMFLTVQVKGPTQEFKKRTTVMVKNEDSLVFVQTDKSIYKPAQTVKFRVVSMDENFHPLNELIPLVYIQDPKGNRIAQWQSFQLEGGLKQFSFPLSSEPFQGSYKVVVQKKSGRRTEHPFTVEEFVLPKFEVQVTVPKIITILEEEMNVSVCGLYTYGKPVPGHVTVSICRKYSDASNCHGEDSQAFCEKFSGQLNSHGCFYQQVKTKVFQLKRKEYEMKLHTKAQIQEEGTVVELTGRQSSEITRTITKLSFVKADSHFRQGIPFFGQVRLVDGKGVPIPNKVIFIRGNEANYYSNATTDEHGLVQFSINTTNVMGTSLTVRVKYKDRSPCYGYQWVSEEHEEAHHTAYLVFSPSKSFVHLEPVSHELPCGQTQTVQAHYILNGGALQGLKKLSFYYLIMAKGGIVRTGTHGLLVKQEDMKGHFSISIPVKSDIAPVARLLIYAVLPTGDVIGDSAKYDVENCLANKVDLSFSPSQSLPALHAHLRVTAAPQSLCALRAVDQSVLLMKPDAELSASSVYNLLPEKDLTGFPGPLNDQGDEDCINRHNVYINGITYTPVSSTNEKDMYSFLEDMGLKAFTNSKIRKPKLCPQLQQYEMHGPEGLRVGFYESDVMGRGHARLVHAEEPPTETVRKYFPETWIWDLVVVNSSGVAEVGVTVPDTITEWKAGAFCLSEDAGLGISSTASLRAFQPFFVELTMPYSVIRGEVFTLKATVLNYLPKCIRVSVQLEASPAFLAVPVEKEQAPHCICANGRQTVSWAITPKSLGNVNFTVSAEALESQELCGTEVASVPEYGKKDTVIKPLLVEPEGLEKETTFNSLLCPSGGEVSEELSLKLPPNVVEESARASVSVLGDILGSAMQNTQNLLQMPYGCGEQNMVLFAPNIYVLDYLNETQQLTPEIKSKAIGYLNTGYQRQLNYKHYDGSYSTFGERYGRNQGNTWLTAFVLKTFAQARAYIFIDEAHITQALIWLSQRQKDNGCFRSSGSLLNNAIKGGVEDEVTLSAYITIALLEIPLTVTHPVVRNALFCLESAWKTAQEGDHGSHVYTKALLAYAFALAGNQDKRKEVLQSLHEEAVKKDNSVHWERPQKPKAPVGHFYEPQAPSAEVEMTSYALLAYLTAQPAPTSEDLTSATNIVKWITKQQNAQGGFSSTQDTVVALHALSKYGAATFTRTGKAAQVTIQSSGTFSNKFQVDNNNRLLLQQVSLPELPGEYSMKVTGEGCVYLQTSLKYNILPEKEEFPFALGVQTLPQTCDEPKAHTSFQISLSVSYTGSRSASNMAIVDVKMVSGFIPLKPTVKMLERSNHVSRTEVSNNHVLIYLDKVSNQTLSLFFTVLQDVPVRDLKPAIVKVYDYYETDEFAIAEYNAPCSKDLGNA.

The N-terminal stretch at 1-23 is a signal peptide; the sequence is MGKNKLLHPSLVLLLLVLLPTDA. Cysteine 48 and cysteine 86 are joined by a disulfide. N-linked (GlcNAc...) asparagine glycosylation is found at asparagine 55, asparagine 70, and asparagine 247. Intrachain disulfides connect cysteine 251–cysteine 299 and cysteine 269–cysteine 287. Residues asparagine 396 and asparagine 410 are each glycosylated (N-linked (GlcNAc...) asparagine). Disulfide bonds link cysteine 470/cysteine 563, cysteine 595/cysteine 771, cysteine 642/cysteine 689, cysteine 821/cysteine 849, cysteine 847/cysteine 883, cysteine 921/cysteine 1321, cysteine 1079/cysteine 1127, and cysteine 1352/cysteine 1467. A bait region region spans residues 690–728; that stretch reads PQLQQYEMHGPEGLRVGFYESDVMGRGHARLVHAEEPPT. Residues glutamine 693 and glutamine 694 each participate in an isoglutamyl lysine isopeptide (Gln-Lys) (interchain with K-? in other proteins) cross-link. 3 inhibitory regions span residues 704–709, 719–723, and 730–735; these read RVGFYE, RLVHA, and TVRKYF. The N-linked (GlcNAc...) asparagine glycan is linked to asparagine 869. Residues 972–975 constitute a cross-link (isoglutamyl cysteine thioester (Cys-Gln)); it reads CGEQ. A glycan (N-linked (GlcNAc...) asparagine) is linked at asparagine 991. Asparagine 1424 is a glycosylation site (N-linked (GlcNAc...) asparagine).

It belongs to the protease inhibitor I39 (alpha-2-macroglobulin) family. In terms of assembly, homotetramer; disulfide-linked. As to expression, plasma.

The protein resides in the secreted. Functionally, is able to inhibit all four classes of proteinases by a unique 'trapping' mechanism. This protein has a peptide stretch, called the 'bait region' which contains specific cleavage sites for different proteinases. When a proteinase cleaves the bait region, a conformational change is induced in the protein which traps the proteinase. The entrapped enzyme remains active against low molecular weight substrates (activity against high molecular weight substrates is greatly reduced). Following cleavage in the bait region a thioester bond is hydrolyzed and mediates the covalent binding of the protein to the proteinase. The protein is Alpha-2-macroglobulin (A2M) of Pongo abelii (Sumatran orangutan).